The following is a 225-amino-acid chain: MEPIKNIPRLCRTLGYEFTEQAFLDQALTHRSASNKHNERLEFLGDSILSIVISDALYHQFPTATEGDLSRMRATLVCGKMLAEIAIEFKLGDYLKLGPGELKSGGFRRESILADAVEAIIGAIYLDSEIEKCRSLVLKWYESRLKVIEPINQKDPKTLLQEHLQKFRKPLPVYKVVHTEGDAHEQTFTVECIVEDLSQAVVGVASSRRKAEQSAAAQVLELMKK.

One can recognise an RNase III domain in the interval 7–129 (IPRLCRTLGY…IIGAIYLDSE (123 aa)). Glu-42 contributes to the Mg(2+) binding site. Residue Asp-46 is part of the active site. Residues Asp-115 and Glu-118 each contribute to the Mg(2+) site. Glu-118 is an active-site residue. Residues 155 to 225 (DPKTLLQEHL…AAQVLELMKK (71 aa)) form the DRBM domain.

The protein belongs to the ribonuclease III family. Homodimer. Mg(2+) is required as a cofactor.

Its subcellular location is the cytoplasm. The enzyme catalyses Endonucleolytic cleavage to 5'-phosphomonoester.. Its function is as follows. Digests double-stranded RNA. Involved in the processing of primary rRNA transcript to yield the immediate precursors to the large and small rRNAs (23S and 16S). Processes some mRNAs, and tRNAs when they are encoded in the rRNA operon. Processes pre-crRNA and tracrRNA of type II CRISPR loci if present in the organism. The chain is Ribonuclease 3 from Shewanella halifaxensis (strain HAW-EB4).